The sequence spans 503 residues: Glucose-6-phosphate 1-dehydrogenase (503 aa).

Residues Gly14 to Lys21, Arg49, and Lys158 each bind NADP(+). D-glucose 6-phosphate is bound by residues Lys158, His188–Lys192, Glu226, and Asp245. The active-site Proton acceptor is the His250. Lys341 contributes to the NADP(+) binding site. Lys344 lines the D-glucose 6-phosphate pocket. NADP(+)-binding residues include Lys350, Arg354, and Arg376. D-glucose 6-phosphate is bound at residue Gln378. NADP(+) is bound by residues Tyr384–Lys386, Arg471, and Tyr487.

It belongs to the glucose-6-phosphate dehydrogenase family.

It carries out the reaction D-glucose 6-phosphate + NADP(+) = 6-phospho-D-glucono-1,5-lactone + NADPH + H(+). Its pathway is carbohydrate degradation; pentose phosphate pathway; D-ribulose 5-phosphate from D-glucose 6-phosphate (oxidative stage): step 1/3. Catalyzes the rate-limiting step of the oxidative pentose-phosphate pathway, which represents a route for the dissimilation of carbohydrates besides glycolysis. The main function of this enzyme is to provide reducing power (NADPH) and pentose phosphates for fatty acid and nucleic acid synthesis. The G6PDH activity is required to cope with hydrogen peroxide and potassium bisulfite stresses and plays a role in adaptation to conditions used in wine fermentations. This Hanseniaspora uvarum (Yeast) protein is Glucose-6-phosphate 1-dehydrogenase.